The chain runs to 152 residues: Superoxide dismutase [Cu-Zn] (152 aa).

H45, H47, and H62 together coordinate Cu cation. A disulfide bridge connects residues C56 and C145. Positions 62, 70, 79, and 82 each coordinate Zn(2+). H119 contributes to the Cu cation binding site.

Belongs to the Cu-Zn superoxide dismutase family. As to quaternary structure, homodimer. The cofactor is Cu cation. Zn(2+) is required as a cofactor.

It localises to the cytoplasm. It carries out the reaction 2 superoxide + 2 H(+) = H2O2 + O2. Destroys radicals which are normally produced within the cells and which are toxic to biological systems. The sequence is that of Superoxide dismutase [Cu-Zn] (SODCC) from Ipomoea batatas (Sweet potato).